The sequence spans 155 residues: Small ribosomal subunit protein uS7 (155 aa).

Belongs to the universal ribosomal protein uS7 family. Part of the 30S ribosomal subunit. Contacts proteins S9 and S11.

One of the primary rRNA binding proteins, it binds directly to 16S rRNA where it nucleates assembly of the head domain of the 30S subunit. Is located at the subunit interface close to the decoding center, probably blocks exit of the E-site tRNA. The sequence is that of Small ribosomal subunit protein uS7 from Pseudothermotoga lettingae (strain ATCC BAA-301 / DSM 14385 / NBRC 107922 / TMO) (Thermotoga lettingae).